A 122-amino-acid polypeptide reads, in one-letter code: Large ribosomal subunit protein uL14 (122 aa).

Belongs to the universal ribosomal protein uL14 family. As to quaternary structure, part of the 50S ribosomal subunit. Forms a cluster with proteins L3 and L19. In the 70S ribosome, L14 and L19 interact and together make contacts with the 16S rRNA in bridges B5 and B8.

In terms of biological role, binds to 23S rRNA. Forms part of two intersubunit bridges in the 70S ribosome. In Enterococcus faecalis (strain ATCC 700802 / V583), this protein is Large ribosomal subunit protein uL14.